The following is a 176-amino-acid chain: Adenine phosphoribosyltransferase (176 aa).

Belongs to the purine/pyrimidine phosphoribosyltransferase family. Homodimer.

It localises to the cytoplasm. It catalyses the reaction AMP + diphosphate = 5-phospho-alpha-D-ribose 1-diphosphate + adenine. Its pathway is purine metabolism; AMP biosynthesis via salvage pathway; AMP from adenine: step 1/1. Functionally, catalyzes a salvage reaction resulting in the formation of AMP, that is energically less costly than de novo synthesis. The protein is Adenine phosphoribosyltransferase of Roseobacter denitrificans (strain ATCC 33942 / OCh 114) (Erythrobacter sp. (strain OCh 114)).